Reading from the N-terminus, the 236-residue chain is 7-cyano-7-deazaguanine synthase (236 aa).

12-22 (FSGGQDSTTCL) is an ATP binding site. 4 residues coordinate Zn(2+): C200, C215, C218, and C221.

It belongs to the QueC family. Zn(2+) serves as cofactor.

The enzyme catalyses 7-carboxy-7-deazaguanine + NH4(+) + ATP = 7-cyano-7-deazaguanine + ADP + phosphate + H2O + H(+). The protein operates within purine metabolism; 7-cyano-7-deazaguanine biosynthesis. Its function is as follows. Catalyzes the ATP-dependent conversion of 7-carboxy-7-deazaguanine (CDG) to 7-cyano-7-deazaguanine (preQ(0)). The chain is 7-cyano-7-deazaguanine synthase from Bradyrhizobium sp. (strain ORS 278).